The primary structure comprises 503 residues: Maturase K (503 aa).

It belongs to the intron maturase 2 family. MatK subfamily.

It localises to the plastid. The protein localises to the chloroplast. In terms of biological role, usually encoded in the trnK tRNA gene intron. Probably assists in splicing its own and other chloroplast group II introns. In Liquidambar orientalis (Oriental sweet gum), this protein is Maturase K.